The following is a 120-amino-acid chain: MVKLTSIAAGVAAIAATASATTTLAQSDERVNLVELGVYVSDIRAHLAQYYMFQAAHPTETYPVEVAEAVFNYGDFTTMLTGIAPDQVTRMITGVPWYSTRLKPAISKALSKDGIYTIAN.

The N-terminal stretch at 1-20 is a signal peptide; sequence MVKLTSIAAGVAAIAATASA.

This sequence belongs to the SRP1/TIP1 family. Seripauperin subfamily.

This is Seripauperin-6 (PAU6) from Saccharomyces cerevisiae (strain ATCC 204508 / S288c) (Baker's yeast).